The primary structure comprises 480 residues: Aspartyl/glutamyl-tRNA(Asn/Gln) amidotransferase subunit B (480 aa).

The protein belongs to the GatB/GatE family. GatB subfamily. In terms of assembly, heterotrimer of A, B and C subunits.

It carries out the reaction L-glutamyl-tRNA(Gln) + L-glutamine + ATP + H2O = L-glutaminyl-tRNA(Gln) + L-glutamate + ADP + phosphate + H(+). It catalyses the reaction L-aspartyl-tRNA(Asn) + L-glutamine + ATP + H2O = L-asparaginyl-tRNA(Asn) + L-glutamate + ADP + phosphate + 2 H(+). Functionally, allows the formation of correctly charged Asn-tRNA(Asn) or Gln-tRNA(Gln) through the transamidation of misacylated Asp-tRNA(Asn) or Glu-tRNA(Gln) in organisms which lack either or both of asparaginyl-tRNA or glutaminyl-tRNA synthetases. The reaction takes place in the presence of glutamine and ATP through an activated phospho-Asp-tRNA(Asn) or phospho-Glu-tRNA(Gln). The protein is Aspartyl/glutamyl-tRNA(Asn/Gln) amidotransferase subunit B of Streptococcus agalactiae serotype Ia (strain ATCC 27591 / A909 / CDC SS700).